A 1182-amino-acid polypeptide reads, in one-letter code: Intraflagellar transport protein 122 homolog (1182 aa).

WD repeat units lie at residues 10–50 (KAEQ…QPLK), 51–91 (GHKD…LKYT), 93–129 (NDSI…VSKH), 131–169 (SSSK…KVKI), 174–217 (GSLS…IGKD), 219–258 (PLNF…LGTV), 260–300 (EQNS…HGLY), and 453–492 (KQAT…LLFQ).

In terms of assembly, component of the IFT complex A (IFT-A) complex. IFT-A complex is divided into a core subcomplex composed of IFT122:IFT140:WDR19 which is associated with TULP3 and a peripheral subcomplex composed of IFT43:WDR35:TTC21B. Interacts with IFT43:WDR35; the interaction connects the 2 IFT-A subcomplexes. Interacts with IFTAP; the interaction associates IFTAP with IFT-A complex.

Its subcellular location is the cell projection. It localises to the cilium. The protein localises to the cytoplasm. It is found in the cytoskeleton. The protein resides in the cilium basal body. As a component of the IFT complex A (IFT-A), a complex required for retrograde ciliary transport and entry into cilia of G protein-coupled receptors (GPCRs), it is required in ciliogenesis and ciliary protein trafficking. Involved in cilia formation during neuronal patterning. Acts as a negative regulator of Shh signaling. Required to recruit TULP3 to primary cilia. The chain is Intraflagellar transport protein 122 homolog from Mus musculus (Mouse).